Here is a 445-residue protein sequence, read N- to C-terminus: Phosphoglucosamine mutase (445 aa).

Residue Ser-102 is the Phosphoserine intermediate of the active site. Residues Ser-102, Asp-241, Asp-243, and Asp-245 each coordinate Mg(2+). Ser-102 carries the phosphoserine modification.

This sequence belongs to the phosphohexose mutase family. The cofactor is Mg(2+). Post-translationally, activated by phosphorylation.

It carries out the reaction alpha-D-glucosamine 1-phosphate = D-glucosamine 6-phosphate. Its function is as follows. Catalyzes the conversion of glucosamine-6-phosphate to glucosamine-1-phosphate. In Novosphingobium aromaticivorans (strain ATCC 700278 / DSM 12444 / CCUG 56034 / CIP 105152 / NBRC 16084 / F199), this protein is Phosphoglucosamine mutase.